A 504-amino-acid chain; its full sequence is Maturase K (504 aa).

The protein belongs to the intron maturase 2 family. MatK subfamily.

The protein localises to the plastid. The protein resides in the chloroplast. Functionally, usually encoded in the trnK tRNA gene intron. Probably assists in splicing its own and other chloroplast group II introns. This chain is Maturase K, found in Cucumis sativus (Cucumber).